Reading from the N-terminus, the 1796-residue chain is Non-reducing polyketide synthase nscA (1796 aa).

Positions 18–256 are N-terminal acylcarrier protein transacylase domain (SAT); that stretch reads DDLKDLFRRL…PLPVYDGLCH (239 aa). Positions 392-825 constitute a Ketosynthase family 3 (KS3) domain; that stretch reads SSKLAIVGMA…GGNTTLLLED (434 aa). Active-site for beta-ketoacyl synthase activity residues include cysteine 565, histidine 700, and histidine 743. The segment at 931–1251 is malonyl-CoA:ACP transacylase (MAT) domain; the sequence is FTGQGAYYSG…SLVTLHLAGL (321 aa). Residues 1317–1636 are product template (PT) domain; that stretch reads TSLVHQITAE…RLLMDRFFSP (320 aa). The N-terminal hotdog fold stretch occupies residues 1321-1457; it reads HQITAETVEA…ATVRFEDPVA (137 aa). Residues 1321-1631 enclose the PKS/mFAS DH domain; the sequence is HQITAETVEA…FRRVPRLLMD (311 aa). The active-site Proton acceptor; for dehydratase activity is the histidine 1353. The interval 1485–1631 is C-terminal hotdog fold; that stretch reads ASRLSKPLAY…FRRVPRLLMD (147 aa). The active-site Proton donor; for dehydratase activity is the aspartate 1542. The segment at 1688–1720 is disordered; sequence TPESTPPLAPSSESSTPKESPIATPPESERADP. Over residues 1697–1708 the composition is skewed to low complexity; it reads PSSESSTPKESP. The 78-residue stretch at 1719 to 1796 folds into the Carrier domain; sequence DPMDNMVSQC…EMTAWIEEYC (78 aa). Serine 1756 is subject to O-(pantetheine 4'-phosphoryl)serine.

Requires pantetheine 4'-phosphate as cofactor.

It functions in the pathway secondary metabolite biosynthesis. Non-reducing polyketide synthase; part of the gene cluster that mediates the biosynthesis of neosartoricin B, a prenylated anthracenone that probably exhibits T-cell antiproliferative activity, suggestive of a physiological role as an immunosuppressive agent. The non-reducing polyketide synthase nscA probably synthesizes and cyclizes the decaketide backbone. The hydrolase nscB then mediates the product release through hydrolysis followed by spontaneous decarboxylation. The prenyltransferase nscD catalyzes the addition of the dimethylallyl group to the aromatic C5. The FAD-dependent monooxygenase nscC is then responsible for the stereospecific hydroxylation at C2. Neosartoricin B can be converted into two additional compounds neosartoricins C and D. Neosartoricin C is a spirocyclic compound that is cyclized through the attack of C3 hydroxyl on C14, followed by dehydration. On the other hand, neosartoricin D is a further cyclized compound in which attack of C2 on C14 in neosartoricin C results in the formation of the acetal-containing dioxabicyclo-octanone ring. Both of these compounds are novel and possibly represent related metabolites of the gene cluster. The sequence is that of Non-reducing polyketide synthase nscA from Arthroderma otae (strain ATCC MYA-4605 / CBS 113480) (Microsporum canis).